The chain runs to 462 residues: MSLGQLSYTPVTDVGIGAIELYFPQNFVDQNDLEKFNNVSSGKYTIGLGQQQMGFCSDNEDIVSISLTVTRKLIETYKISTDSIGCLVVGTETMIDKSKSVKTALMDLFPGNSDIEGVDIKNACFGGAQALLHAIDWVTVNHPLDKKNAIVVVADIAIYEEGPARCTGGAGAIAFLICPDASIPIDRQFSACHMKNTWDFFKPITPIPSEYPVVDGSLSLSSYLEAVRMTYTYFISKVNRHTTGIDGLNSFDGVFLHSPFTKMVQKGLAVMNYTDSQLRHKQLNGNGVDHKLDENDRAGLAKMIELSAQVWKEKTDPYLVFNRRIGNMYTPSLFAQLLAYLAADDCVTGEKSILFFAYGSGLASAIFPGRVRQTSNLDKIRQVAIRAIKRLDDRIQFTPEEFTETLQKREVFLRSKEIPKSPSETSLFPNTYFLDNMDKLYRRSYTLHEEPNGVQNGNGIHH.

Glu92 acts as the Proton donor/acceptor in catalysis. The active-site Acyl-thioester intermediate is Cys124. Cys124, Thr167, Ser219, His257, Lys266, Asn327, and Ser360 together coordinate (3S)-3-hydroxy-3-methylglutaryl-CoA. The active-site Proton donor/acceptor is the His257. Lys408 is covalently cross-linked (Glycyl lysine isopeptide (Lys-Gly) (interchain with G-Cter in SUMO)).

This sequence belongs to the thiolase-like superfamily. HMG-CoA synthase family. Ubiquitinated.

It catalyses the reaction acetoacetyl-CoA + acetyl-CoA + H2O = (3S)-3-hydroxy-3-methylglutaryl-CoA + CoA + H(+). It functions in the pathway metabolic intermediate biosynthesis; (R)-mevalonate biosynthesis; (R)-mevalonate from acetyl-CoA: step 2/3. Functionally, this enzyme condenses acetyl-CoA with acetoacetyl-CoA to form HMG-CoA, which is the substrate for HMG-CoA reductase. In Caenorhabditis elegans, this protein is Hydroxymethylglutaryl-CoA synthase.